A 316-amino-acid chain; its full sequence is 4-diphosphocytidyl-2-C-methyl-D-erythritol kinase (316 aa).

The active site involves K32. 126–136 (PVGAGLGGGSA) contacts ATP. Residue D168 is part of the active site.

The protein belongs to the GHMP kinase family. IspE subfamily.

The catalysed reaction is 4-CDP-2-C-methyl-D-erythritol + ATP = 4-CDP-2-C-methyl-D-erythritol 2-phosphate + ADP + H(+). The protein operates within isoprenoid biosynthesis; isopentenyl diphosphate biosynthesis via DXP pathway; isopentenyl diphosphate from 1-deoxy-D-xylulose 5-phosphate: step 3/6. In terms of biological role, catalyzes the phosphorylation of the position 2 hydroxy group of 4-diphosphocytidyl-2C-methyl-D-erythritol. In Bifidobacterium longum subsp. infantis (strain ATCC 15697 / DSM 20088 / JCM 1222 / NCTC 11817 / S12), this protein is 4-diphosphocytidyl-2-C-methyl-D-erythritol kinase.